A 918-amino-acid polypeptide reads, in one-letter code: MQPSEQPAARKKLTPVMRQYEDAKALHPDAILFFRMGDFYEMFNDDAVLVSRALNLTLTSRNKGEPDESPMAGVPHHAAHGYIARLLALGHKVAICEQCGDPSKIKGLVPRQVVRVVTPGLVTETEQLDARANHYLAAVDGGGAPRGDALGAGGPYGLSLLDLSTGELSATSVPDAATLLAELARADPREALIARDLPDVRAAAASLACRAALRDDEELDSAHVASILDDAAIEPISAAALAEHPLPAVRAAARALRFARRCSPGARIPVRRIAPHDTSGTLRIDETAQAHLELVRAADGGRRGTLLDVIDCTVTPGGARLLRRRLLSPLADLAGIRRRLDEVELFVSHPRARGELRQALGGVGDLERLSVRALLGEATPRDLGLLRDGLTAAPAAIAAVRSIPDLGKAAARSDDGAAARGKDGAAAGSSSGSEPLLAEAAALDVVADVCAELTAALIERPPPNTREGGIFREGYDKELDDARGVEKNATELILALEAKLRTQTGAPSLRVKYTRVFGWYIEVTRAHIAKVPETFRRKQTVATGERYTSDELDELADKIEHAGARALERETALFDRLRALVAKSEGRLRALARKLAAWDVAAALADVAHRNDYVRPHVTAGEALAIRDGRHPVVERYAAAGHFVPNDTRLDLSGERLWLITGPNMAGKSTLMRQVALIVVLAQMGSYVPAREAEIGLVDRILSRVGASDNVARGESTFMVEMRETAEILRDATRRSLVILDEIGRGTSTYDGLAIAWAVAEHLFDAIGCRALFATHYHELTELSARAPGIANYSVAAREHGDDVIFLHKLEAGPASRSYGVAVARLAGVPEGVLARARAILATLESGAALPGGKHASLRGRTRGGAAQLDLFAPAQAAVPPEQSAVIETLRAVDVDRLAPLDALRLVAKLKGLLGGGG.

Residue 662-669 (GPNMAGKS) participates in ATP binding.

Belongs to the DNA mismatch repair MutS family.

Its function is as follows. This protein is involved in the repair of mismatches in DNA. It is possible that it carries out the mismatch recognition step. This protein has a weak ATPase activity. This Sorangium cellulosum (strain So ce56) (Polyangium cellulosum (strain So ce56)) protein is DNA mismatch repair protein MutS.